The chain runs to 419 residues: L-rhamnose isomerase (419 aa).

His-262, Asp-294, and Asp-296 together coordinate Mn(2+).

This sequence belongs to the rhamnose isomerase family. As to quaternary structure, homotetramer. It depends on Mn(2+) as a cofactor.

The protein resides in the cytoplasm. It carries out the reaction L-rhamnopyranose = L-rhamnulose. Its pathway is carbohydrate degradation; L-rhamnose degradation; glycerone phosphate from L-rhamnose: step 1/3. Its function is as follows. Catalyzes the interconversion of L-rhamnose and L-rhamnulose. This Escherichia coli O6:H1 (strain CFT073 / ATCC 700928 / UPEC) protein is L-rhamnose isomerase.